We begin with the raw amino-acid sequence, 247 residues long: Peroxisomal membrane protein 11A (247 aa).

Over 1–83 the chain is Cytoplasmic; that stretch reads MDAFIRFTNQ…SVRATDLVPR (83 aa). The chain crosses the membrane as a helical span at residues 84-105; sequence ICLTLASLNRVIYFICDTVLFV. The Lumenal segment spans residues 106 to 219; that stretch reads RSTGLASGVN…DQLGIYKSNP (114 aa). A helical transmembrane segment spans residues 220–239; that stretch reads GIIGLGGLVSSVAGIITVAY. The tract at residues 220–239 is required for homodimerization, interaction with PEX11G, and peroxisomal localization; it reads GIIGLGGLVSSVAGIITVAY. At 240–247 the chain is on the cytoplasmic side; sequence PQMKLKTQ.

The protein belongs to the peroxin-11 family. As to quaternary structure, homodimer. Heterodimer with PEX11G. Probably interacts with COPB2 and COPA. Interacts with PEX19. Interacts with FIS1.

The protein resides in the peroxisome membrane. Functionally, may be involved in peroxisomal proliferation and may regulate peroxisomes division. May mediate binding of coatomer proteins to the peroxisomal membrane. Promotes membrane protrusion and elongation on the peroxisomal surface. This is Peroxisomal membrane protein 11A (PEX11A) from Bos taurus (Bovine).